The sequence spans 428 residues: UPF0229 protein YeaH (428 aa).

The segment covering 78 to 90 has biased composition (basic and acidic residues); sequence GNDHFIQNDRIER. Residues 78 to 111 form a disordered region; it reads GNDHFIQNDRIERPQGGGGGGSGSGQGQASQDGE. Residues 92–103 show a composition bias toward gly residues; the sequence is QGGGGGGSGSGQ.

It belongs to the UPF0229 family.

This Salmonella heidelberg (strain SL476) protein is UPF0229 protein YeaH.